The sequence spans 317 residues: Methionyl-tRNA formyltransferase (317 aa).

112-115 (SLLP) is a binding site for (6S)-5,6,7,8-tetrahydrofolate.

This sequence belongs to the Fmt family.

It catalyses the reaction L-methionyl-tRNA(fMet) + (6R)-10-formyltetrahydrofolate = N-formyl-L-methionyl-tRNA(fMet) + (6S)-5,6,7,8-tetrahydrofolate + H(+). Functionally, attaches a formyl group to the free amino group of methionyl-tRNA(fMet). The formyl group appears to play a dual role in the initiator identity of N-formylmethionyl-tRNA by promoting its recognition by IF2 and preventing the misappropriation of this tRNA by the elongation apparatus. The chain is Methionyl-tRNA formyltransferase from Geobacter sulfurreducens (strain ATCC 51573 / DSM 12127 / PCA).